Here is a 119-residue protein sequence, read N- to C-terminus: Large ribosomal subunit protein uL22c (119 aa).

It belongs to the universal ribosomal protein uL22 family. Part of the 50S ribosomal subunit.

The protein localises to the plastid. The protein resides in the chloroplast. Its function is as follows. This protein binds specifically to 23S rRNA. In terms of biological role, the globular domain of the protein is located near the polypeptide exit tunnel on the outside of the subunit, while an extended beta-hairpin is found that lines the wall of the exit tunnel in the center of the 70S ribosome. This Chlorokybus atmophyticus (Soil alga) protein is Large ribosomal subunit protein uL22c (rpl22).